The primary structure comprises 119 residues: Holo-[acyl-carrier-protein] synthase (119 aa).

2 residues coordinate Mg(2+): Asp8 and Glu60.

The protein belongs to the P-Pant transferase superfamily. AcpS family. Mg(2+) is required as a cofactor.

The protein localises to the cytoplasm. It carries out the reaction apo-[ACP] + CoA = holo-[ACP] + adenosine 3',5'-bisphosphate + H(+). In terms of biological role, transfers the 4'-phosphopantetheine moiety from coenzyme A to a Ser of acyl-carrier-protein. The sequence is that of Holo-[acyl-carrier-protein] synthase from Mycoplasma pneumoniae (strain ATCC 29342 / M129 / Subtype 1) (Mycoplasmoides pneumoniae).